We begin with the raw amino-acid sequence, 265 residues long: Adenosine 5'-phosphosulfate reductase (265 aa).

[4Fe-4S] cluster-binding residues include C135, C136, C218, and C221. C246 acts as the Nucleophile; cysteine thiosulfonate intermediate in catalysis.

This sequence belongs to the PAPS reductase family. CysH subfamily. The cofactor is [4Fe-4S] cluster.

The protein localises to the cytoplasm. The enzyme catalyses [thioredoxin]-disulfide + sulfite + AMP + 2 H(+) = adenosine 5'-phosphosulfate + [thioredoxin]-dithiol. Its pathway is sulfur metabolism; hydrogen sulfide biosynthesis; sulfite from sulfate. Its function is as follows. Catalyzes the formation of sulfite from adenosine 5'-phosphosulfate (APS) using thioredoxin as an electron donor. The sequence is that of Adenosine 5'-phosphosulfate reductase from Rhizobium meliloti (strain 1021) (Ensifer meliloti).